The chain runs to 259 residues: Hemin import ATP-binding protein HmuV (259 aa).

The ABC transporter domain occupies 8 to 242 (ISANNISYRI…KMIENVYGHK (235 aa)). Residue 40 to 47 (GPNGAGKS) coordinates ATP.

This sequence belongs to the ABC transporter superfamily. Heme (hemin) importer (TC 3.A.1.14.5) family. As to quaternary structure, the complex is composed of two ATP-binding proteins (HmuV), two transmembrane proteins (HmuU) and a solute-binding protein (HmuT).

It localises to the cell inner membrane. Part of the ABC transporter complex HmuTUV involved in hemin import. Responsible for energy coupling to the transport system. The protein is Hemin import ATP-binding protein HmuV of Aliivibrio fischeri (strain ATCC 700601 / ES114) (Vibrio fischeri).